Reading from the N-terminus, the 251-residue chain is Lactose phosphotransferase system repressor (251 aa).

The HTH deoR-type domain maps to 3–58 (KYDRLDEITKLVNKRGSVRTNEIVEDLNVSDMTVRRDLAELEEKGVLTKIHGGARS). The H-T-H motif DNA-binding region spans 20-39 (VRTNEIVEDLNVSDMTVRRD).

Functionally, repressor of the lactose catabolism operon. Galactose-6-phosphate is the inducer. This is Lactose phosphotransferase system repressor (lacR) from Staphylococcus epidermidis (strain ATCC 35984 / DSM 28319 / BCRC 17069 / CCUG 31568 / BM 3577 / RP62A).